Here is a 431-residue protein sequence, read N- to C-terminus: Glutamate-1-semialdehyde 2,1-aminomutase (431 aa).

N6-(pyridoxal phosphate)lysine is present on lysine 264.

Belongs to the class-III pyridoxal-phosphate-dependent aminotransferase family. HemL subfamily. In terms of assembly, homodimer. It depends on pyridoxal 5'-phosphate as a cofactor.

It localises to the cytoplasm. It carries out the reaction (S)-4-amino-5-oxopentanoate = 5-aminolevulinate. Its pathway is porphyrin-containing compound metabolism; protoporphyrin-IX biosynthesis; 5-aminolevulinate from L-glutamyl-tRNA(Glu): step 2/2. The polypeptide is Glutamate-1-semialdehyde 2,1-aminomutase (Clostridium beijerinckii (strain ATCC 51743 / NCIMB 8052) (Clostridium acetobutylicum)).